The sequence spans 172 residues: Iron-sulfur cluster assembly protein SufA (172 aa).

The signal sequence occupies residues 1-19 (MFINIFLFLFAATINISSS). Positions 96, 164, and 166 each coordinate [4Fe-4S] cluster.

It belongs to the HesB/IscA family. As to quaternary structure, homodimer.

It localises to the plastid. The protein resides in the apicoplast. Its pathway is cofactor biosynthesis; iron-sulfur cluster biosynthesis. Its function is as follows. Participates in the sulfur mobilization (SUF) pathway for iron-sulfur (Fe-S) cluster biogenesis. Involved in the pre-assembly of [4Fe-4S] clusters and their transfer to target proteins. The sequence is that of Iron-sulfur cluster assembly protein SufA from Plasmodium berghei (strain Anka).